The following is a 205-amino-acid chain: Small heat shock protein hspG12 (205 aa).

The sHSP domain occupies 35–205 (KTIIDILPPM…YSNTIKININ (171 aa)). Positions 99–147 (PSLLDTKEDEASIEEFDEDDIKPKSTETTSTLSNSKENKKDENKSKSTE) are disordered. Residues 109–118 (ASIEEFDEDD) show a composition bias toward acidic residues. Residues 134 to 147 (KENKKDENKSKSTE) are compositionally biased toward basic and acidic residues.

Belongs to the small heat shock protein (HSP20) family.

This Dictyostelium discoideum (Social amoeba) protein is Small heat shock protein hspG12 (hspG12).